We begin with the raw amino-acid sequence, 481 residues long: Glutamyl-tRNA(Gln) amidotransferase subunit A (481 aa).

Catalysis depends on charge relay system residues K74 and S149. The Acyl-ester intermediate role is filled by S173.

This sequence belongs to the amidase family. GatA subfamily. As to quaternary structure, heterotrimer of A, B and C subunits.

It catalyses the reaction L-glutamyl-tRNA(Gln) + L-glutamine + ATP + H2O = L-glutaminyl-tRNA(Gln) + L-glutamate + ADP + phosphate + H(+). In terms of biological role, allows the formation of correctly charged Gln-tRNA(Gln) through the transamidation of misacylated Glu-tRNA(Gln) in organisms which lack glutaminyl-tRNA synthetase. The reaction takes place in the presence of glutamine and ATP through an activated gamma-phospho-Glu-tRNA(Gln). This Francisella tularensis subsp. tularensis (strain WY96-3418) protein is Glutamyl-tRNA(Gln) amidotransferase subunit A.